The primary structure comprises 122 residues: LYR motif-containing protein 1 (122 aa).

This sequence belongs to the complex I LYR family.

May promote cell proliferation and inhibition of apoptosis of preadipocytes. The protein is LYR motif-containing protein 1 (Lyrm1) of Mus musculus (Mouse).